Reading from the N-terminus, the 289-residue chain is DDRGK domain-containing protein 1 (289 aa).

Topologically, residues Met1 to Asp2 are lumenal. A helical transmembrane segment spans residues Pro3–Leu23. At Arg24–Pro289 the chain is on the cytoplasmic side. The disordered stretch occupies residues Arg65 to Glu168. Residues Leu70–Pro85 are compositionally biased toward acidic residues. A compositionally biased stretch (basic and acidic residues) spans Ile87–Gln166.

This sequence belongs to the DDRGK1 family. As to quaternary structure, interacts with Atg9; the interaction is transient.

It is found in the endoplasmic reticulum membrane. In terms of biological role, substrate adapter for ufmylation, the covalent attachment of the ubiquitin-like modifier UFM1 to substrate proteins. Required for ufmylation of Atg9; protects the nervous system during aging, possibly by stabilizing Atg9 and supporting its function. The polypeptide is DDRGK domain-containing protein 1 (Bombyx mori (Silk moth)).